The primary structure comprises 368 residues: Glutamate 5-kinase (368 aa).

Position 15 (lysine 15) interacts with ATP. Substrate-binding residues include serine 55, aspartate 143, and asparagine 155. ATP contacts are provided by residues serine 175–aspartate 176 and serine 217–lysine 223. One can recognise a PUA domain in the interval glutamate 277–alanine 354.

It belongs to the glutamate 5-kinase family.

The protein localises to the cytoplasm. The enzyme catalyses L-glutamate + ATP = L-glutamyl 5-phosphate + ADP. It functions in the pathway amino-acid biosynthesis; L-proline biosynthesis; L-glutamate 5-semialdehyde from L-glutamate: step 1/2. Its function is as follows. Catalyzes the transfer of a phosphate group to glutamate to form L-glutamate 5-phosphate. The sequence is that of Glutamate 5-kinase from Sphingopyxis alaskensis (strain DSM 13593 / LMG 18877 / RB2256) (Sphingomonas alaskensis).